The primary structure comprises 228 residues: Cytochrome c oxidase subunit 2 (228 aa).

At 1-26 (MPNWGQVMFQDAASSVMLQLVSFHDH) the chain is on the mitochondrial intermembrane side. Residues 27–47 (ALLVLTLVLTVVGYALLALML) form a helical membrane-spanning segment. At 48-60 (NKQVNRYIMEAQT) the chain is on the mitochondrial matrix side. Residues 61–81 (VETIWTILPALILLVLALPSL) form a helical membrane-spanning segment. Topologically, residues 82 to 228 (RILYITDEVS…FMSWVSNFKP (147 aa)) are mitochondrial intermembrane. The Cu cation site is built by histidine 161, cysteine 196, glutamate 198, cysteine 200, histidine 204, and methionine 207. Glutamate 198 is a Mg(2+) binding site.

This sequence belongs to the cytochrome c oxidase subunit 2 family. As to quaternary structure, component of the cytochrome c oxidase (complex IV, CIV), a multisubunit enzyme composed of a catalytic core of 3 subunits and several supernumerary subunits. The complex exists as a monomer or a dimer and forms supercomplexes (SCs) in the inner mitochondrial membrane with ubiquinol-cytochrome c oxidoreductase (cytochrome b-c1 complex, complex III, CIII). Cu cation serves as cofactor.

The protein localises to the mitochondrion inner membrane. It carries out the reaction 4 Fe(II)-[cytochrome c] + O2 + 8 H(+)(in) = 4 Fe(III)-[cytochrome c] + 2 H2O + 4 H(+)(out). In terms of biological role, component of the cytochrome c oxidase, the last enzyme in the mitochondrial electron transport chain which drives oxidative phosphorylation. The respiratory chain contains 3 multisubunit complexes succinate dehydrogenase (complex II, CII), ubiquinol-cytochrome c oxidoreductase (cytochrome b-c1 complex, complex III, CIII) and cytochrome c oxidase (complex IV, CIV), that cooperate to transfer electrons derived from NADH and succinate to molecular oxygen, creating an electrochemical gradient over the inner membrane that drives transmembrane transport and the ATP synthase. Cytochrome c oxidase is the component of the respiratory chain that catalyzes the reduction of oxygen to water. Electrons originating from reduced cytochrome c in the intermembrane space (IMS) are transferred via the dinuclear copper A center (CU(A)) of subunit 2 and heme A of subunit 1 to the active site in subunit 1, a binuclear center (BNC) formed by heme A3 and copper B (CU(B)). The BNC reduces molecular oxygen to 2 water molecules using 4 electrons from cytochrome c in the IMS and 4 protons from the mitochondrial matrix. This Lumbricus terrestris (Common earthworm) protein is Cytochrome c oxidase subunit 2 (COII).